Here is a 308-residue protein sequence, read N- to C-terminus: Ribosomal RNA small subunit methyltransferase H (308 aa).

S-adenosyl-L-methionine is bound by residues Gly-36–His-38, Asp-55, Phe-86, Asp-103, and Gln-110.

The protein belongs to the methyltransferase superfamily. RsmH family.

Its subcellular location is the cytoplasm. It catalyses the reaction cytidine(1402) in 16S rRNA + S-adenosyl-L-methionine = N(4)-methylcytidine(1402) in 16S rRNA + S-adenosyl-L-homocysteine + H(+). Functionally, specifically methylates the N4 position of cytidine in position 1402 (C1402) of 16S rRNA. In Helicobacter pylori (strain P12), this protein is Ribosomal RNA small subunit methyltransferase H.